A 491-amino-acid polypeptide reads, in one-letter code: Cobyric acid synthase (491 aa).

Residues 246–432 (RKLIACPILP…VHGLLADAEL (187 aa)) form the GATase cobBQ-type domain. The active-site Nucleophile is the Cys-328. His-424 is an active-site residue.

It belongs to the CobB/CobQ family. CobQ subfamily.

It participates in cofactor biosynthesis; adenosylcobalamin biosynthesis. In terms of biological role, catalyzes amidations at positions B, D, E, and G on adenosylcobyrinic A,C-diamide. NH(2) groups are provided by glutamine, and one molecule of ATP is hydrogenolyzed for each amidation. The protein is Cobyric acid synthase of Novosphingobium aromaticivorans (strain ATCC 700278 / DSM 12444 / CCUG 56034 / CIP 105152 / NBRC 16084 / F199).